We begin with the raw amino-acid sequence, 738 residues long: Platelet endothelial cell adhesion molecule (738 aa).

The first 27 residues, 1-27 (MQPRWAQGATMWLGVLLTLLLCSSLEG), serve as a signal peptide directing secretion. Over 28-601 (QENSFTINSV…VRVILAPWKK (574 aa)) the chain is Extracellular. Ig-like C2-type domains follow at residues 35-121 (NSVD…KTTA), 145-233 (GGIV…TESF), and 236-315 (PKFH…SKVS). Asn-52, Asn-84, and Asn-151 each carry an N-linked (GlcNAc...) asparagine glycan. Cys-57 and Cys-109 are oxidised to a cystine. Cystine bridges form between Cys-152–Cys-206 and Cys-256–Cys-304. Residues Asn-301, Asn-320, Asn-344, Asn-356, Asn-453, and Asn-551 are each glycosylated (N-linked (GlcNAc...) asparagine). 3 Ig-like C2-type domains span residues 328-401 (PELE…NTVQ), 424-493 (GQTI…EVLR), and 499-591 (PVDE…KILT). 3 disulfide bridges follow: Cys-347-Cys-386, Cys-431-Cys-476, and Cys-523-Cys-572. The chain crosses the membrane as a helical span at residues 602 to 620 (GLIAVVIIGVIIALLIIAA). Residues 621-738 (KCYFLRKAKA…SRTEGSLDGT (118 aa)) lie on the Cytoplasmic side of the membrane. The S-palmitoyl cysteine moiety is linked to residue Cys-622. Positions 658–715 (EANSHYGHNDDVRNHAMKPINDNKEPLNSDVQYTEVQVSSAESHKDLGKKDTETVYSE) are disordered. Residues 686 to 698 (SDVQYTEVQVSSA) are compositionally biased toward polar residues. Short sequence motifs (ITIM motif) lie at residues 688–693 (VQYTEV) and 711–716 (TVYSEV). Tyr-690 and Tyr-713 each carry phosphotyrosine; by FER. The span at 699-715 (ESHKDLGKKDTETVYSE) shows a compositional bias: basic and acidic residues. The tract at residues 709 to 729 (TETVYSEVRKAVPDAVESRYS) is membrane-bound segment which detaches upon phosphorylation. Residues 721–738 (PDAVESRYSRTEGSLDGT) are may play a role in cytoprotective signaling. 2 positions are modified to phosphoserine: Ser-729 and Ser-734.

In terms of assembly, trans-homodimer (via Ig-like C2-type 1 and Ig-like C2-type 2 domains); trans-homodimerization is required for cell-cell interaction. Forms a complex with BDKRB2 and GNAQ. Interacts with BDKRB2 and GNAQ. Interacts with PTPN11; Tyr-713 is critical for PTPN11 recruitment. Interacts with FER. Interacts (via Ig-like C2-type domain 6) with CD177; the interaction is Ca(2+)-dependent; the interaction is direct. Phosphorylated on Ser and Tyr residues after cellular activation by src kinases. Upon activation, phosphorylated on Ser-729 which probably initiates the dissociation of the membrane-interaction segment (residues 709-729) from the cell membrane allowing the sequential phosphorylation of Tyr-713 and Tyr-690. Constitutively phosphorylated on Ser-734 in resting platelets. Phosphorylated on tyrosine residues by FER and FES in response to FCER1 activation. In endothelial cells Fyn mediates mechanical-force (stretch or pull) induced tyrosine phosphorylation. In terms of processing, palmitoylation by ZDHHC21 is necessary for cell surface expression in endothelial cells and enrichment in membrane rafts. Expressed on platelets and leukocytes and is primarily concentrated at the borders between endothelial cells. Expressed in human umbilical vein endothelial cells (HUVECs) (at protein level). Expressed on neutrophils (at protein level). Isoform Long predominates in all tissues examined. Isoform Delta12 is detected only in trachea. Isoform Delta14-15 is only detected in lung. Isoform Delta14 is detected in all tissues examined with the strongest expression in heart. Isoform Delta15 is expressed in brain, testis, ovary, cell surface of platelets, human umbilical vein endothelial cells (HUVECs), Jurkat T-cell leukemia, human erythroleukemia (HEL) and U-937 histiocytic lymphoma cell lines (at protein level).

It is found in the cell membrane. Its subcellular location is the membrane raft. The protein resides in the cell junction. In terms of biological role, cell adhesion molecule which is required for leukocyte transendothelial migration (TEM) under most inflammatory conditions. Tyr-690 plays a critical role in TEM and is required for efficient trafficking of PECAM1 to and from the lateral border recycling compartment (LBRC) and is also essential for the LBRC membrane to be targeted around migrating leukocytes. Trans-homophilic interaction may play a role in endothelial cell-cell adhesion via cell junctions. Heterophilic interaction with CD177 plays a role in transendothelial migration of neutrophils. Homophilic ligation of PECAM1 prevents macrophage-mediated phagocytosis of neighboring viable leukocytes by transmitting a detachment signal. Promotes macrophage-mediated phagocytosis of apoptotic leukocytes by tethering them to the phagocytic cells; PECAM1-mediated detachment signal appears to be disabled in apoptotic leukocytes. Modulates bradykinin receptor BDKRB2 activation. Regulates bradykinin- and hyperosmotic shock-induced ERK1/2 activation in endothelial cells. Induces susceptibility to atherosclerosis. Functionally, does not protect against apoptosis. This is Platelet endothelial cell adhesion molecule (PECAM1) from Homo sapiens (Human).